The primary structure comprises 346 residues: Aspartate-semialdehyde dehydrogenase (346 aa).

NADP(+)-binding positions include 12–15 (SGAV) and 40–41 (RS). R101 is a binding site for phosphate. C131 functions as the Acyl-thioester intermediate in the catalytic mechanism. Position 158 (Q158) interacts with substrate. 161-162 (SG) lines the NADP(+) pocket. K225 contributes to the phosphate binding site. R246 contributes to the substrate binding site. The active-site Proton acceptor is the H253. Q326 contacts NADP(+).

It belongs to the aspartate-semialdehyde dehydrogenase family. In terms of assembly, homodimer.

The catalysed reaction is L-aspartate 4-semialdehyde + phosphate + NADP(+) = 4-phospho-L-aspartate + NADPH + H(+). It functions in the pathway amino-acid biosynthesis; L-lysine biosynthesis via DAP pathway; (S)-tetrahydrodipicolinate from L-aspartate: step 2/4. It participates in amino-acid biosynthesis; L-methionine biosynthesis via de novo pathway; L-homoserine from L-aspartate: step 2/3. Its pathway is amino-acid biosynthesis; L-threonine biosynthesis; L-threonine from L-aspartate: step 2/5. Catalyzes the NADPH-dependent formation of L-aspartate-semialdehyde (L-ASA) by the reductive dephosphorylation of L-aspartyl-4-phosphate. This Helicobacter pylori (strain ATCC 700392 / 26695) (Campylobacter pylori) protein is Aspartate-semialdehyde dehydrogenase.